A 323-amino-acid polypeptide reads, in one-letter code: Probable ATP-dependent 6-phosphofructokinase (323 aa).

ATP-binding positions include glycine 11, 72-73 (RF), and 102-105 (GDGS). Aspartate 103 is a Mg(2+) binding site. Residues 125-127 (TID), arginine 162, 169-171 (MGR), glutamate 221, and 253-256 (HTQR) each bind substrate. Residue aspartate 127 is the Proton acceptor of the active site.

The protein belongs to the phosphofructokinase type A (PFKA) family. Homotetramer. Mg(2+) is required as a cofactor.

The protein resides in the cytoplasm. The enzyme catalyses beta-D-fructose 6-phosphate + ATP = beta-D-fructose 1,6-bisphosphate + ADP + H(+). The protein operates within carbohydrate degradation; glycolysis; D-glyceraldehyde 3-phosphate and glycerone phosphate from D-glucose: step 3/4. Its function is as follows. Catalyzes the phosphorylation of D-fructose 6-phosphate to fructose 1,6-bisphosphate by ATP, the first committing step of glycolysis. This is Probable ATP-dependent 6-phosphofructokinase (pfkA) from Mycoplasma genitalium (strain ATCC 33530 / DSM 19775 / NCTC 10195 / G37) (Mycoplasmoides genitalium).